A 507-amino-acid polypeptide reads, in one-letter code: ATP synthase subunit alpha, chloroplastic (507 aa).

170-177 (GDRQTGKT) provides a ligand contact to ATP. Phosphothreonine is present on threonine 257.

This sequence belongs to the ATPase alpha/beta chains family. F-type ATPases have 2 components, CF(1) - the catalytic core - and CF(0) - the membrane proton channel. CF(1) has five subunits: alpha(3), beta(3), gamma(1), delta(1), epsilon(1). CF(0) has four main subunits: a, b, b' and c.

The protein localises to the plastid. It is found in the chloroplast thylakoid membrane. It catalyses the reaction ATP + H2O + 4 H(+)(in) = ADP + phosphate + 5 H(+)(out). Its function is as follows. Produces ATP from ADP in the presence of a proton gradient across the membrane. The alpha chain is a regulatory subunit. The sequence is that of ATP synthase subunit alpha, chloroplastic from Aethionema grandiflorum (Persian stone-cress).